Reading from the N-terminus, the 144-residue chain is Dynein light chain Tctex-type protein 2B (144 aa).

Belongs to the dynein light chain Tctex-type family. As to quaternary structure, light chain of the cytoplasmic dynein complex 2, a multisubunit complex composed at least of eleven different proteins. The cytoplasmic dynein 2 complex consists of two catalytic heavy chains (HCs) and a number of non-catalytic subunits presented by intermediate chains (ICs), light intermediate chains (LICs) and light chains (LCs). Among them, a heavy chain (DYNC2H1), two intermediate chains (DYNC2I2 and DYNC2I1), a light intermediate chain (DYNC2LI1), and a light chain (DYNLT2B) are unique to the dynein-2 complex, but a subset of the light chains are also shared by dynein-1 and dynein-2 complexes. The dimer DYNLT2B-DYNLT1/DYNLT3 interacts with DYNC2I1; this interaction is crucial for retrograde trafficking of ciliary proteins.

The protein localises to the dynein axonemal particle. Functionally, acts as one of several non-catalytic accessory components of the cytoplasmic dynein 2 complex (dynein-2 complex), a motor protein complex that drives the movement of cargos along microtubules within cilia and flagella in concert with the intraflagellar transport (IFT) system. Required for proper retrograde ciliary transport. This Mus musculus (Mouse) protein is Dynein light chain Tctex-type protein 2B (Dynlt2b).